A 200-amino-acid chain; its full sequence is TATA-box-binding protein (200 aa).

Repeat copies occupy residues 25–101 (LQNI…ARII) and 115–192 (IQNI…YPVL).

The protein belongs to the TBP family. As to quaternary structure, belongs to the TFIID complex together with the TBP-associated factors (TAFs). Binds DNA as monomer.

The protein resides in the nucleus. Functionally, general transcription factor that functions at the core of the DNA-binding multiprotein factor TFIID. Binding of TFIID to the TATA box is the initial transcriptional step of the pre-initiation complex (PIC), playing a role in the activation of eukaryotic genes transcribed by RNA polymerase II. The protein is TATA-box-binding protein of Mesembryanthemum crystallinum (Common ice plant).